A 188-amino-acid chain; its full sequence is Elongation factor P (188 aa).

It belongs to the elongation factor P family.

It is found in the cytoplasm. It functions in the pathway protein biosynthesis; polypeptide chain elongation. Involved in peptide bond synthesis. Stimulates efficient translation and peptide-bond synthesis on native or reconstituted 70S ribosomes in vitro. Probably functions indirectly by altering the affinity of the ribosome for aminoacyl-tRNA, thus increasing their reactivity as acceptors for peptidyl transferase. In Gemmatimonas aurantiaca (strain DSM 14586 / JCM 11422 / NBRC 100505 / T-27), this protein is Elongation factor P.